The primary structure comprises 122 residues: Large ribosomal subunit protein bL12 (122 aa).

This sequence belongs to the bacterial ribosomal protein bL12 family. Homodimer. Part of the ribosomal stalk of the 50S ribosomal subunit. Forms a multimeric L10(L12)X complex, where L10 forms an elongated spine to which 2 to 4 L12 dimers bind in a sequential fashion. Binds GTP-bound translation factors.

Its function is as follows. Forms part of the ribosomal stalk which helps the ribosome interact with GTP-bound translation factors. Is thus essential for accurate translation. The chain is Large ribosomal subunit protein bL12 from Pasteurella multocida (strain Pm70).